The primary structure comprises 330 residues: D-alanine--D-alanine ligase (330 aa).

The 207-residue stretch at 120–326 (KLWLSALDIP…FKQFLEGIIR (207 aa)) folds into the ATP-grasp domain. 150-205 (AFRNWGAVFVKAASQGSSVGCYKVTDAAKLSEAVNAAFGYSDQVLVEKAVRPRELE) serves as a coordination point for ATP. Positions 280, 293, and 295 each coordinate Mg(2+).

Belongs to the D-alanine--D-alanine ligase family. The cofactor is Mg(2+). Mn(2+) serves as cofactor.

The protein resides in the cytoplasm. The catalysed reaction is 2 D-alanine + ATP = D-alanyl-D-alanine + ADP + phosphate + H(+). The protein operates within cell wall biogenesis; peptidoglycan biosynthesis. Its function is as follows. Cell wall formation. This is D-alanine--D-alanine ligase from Tolumonas auensis (strain DSM 9187 / NBRC 110442 / TA 4).